Reading from the N-terminus, the 478-residue chain is Probable glucan endo-1,3-beta-glucosidase A6 (478 aa).

Residues 1–20 form the signal peptide; it reads MSLLAFFLFTILVFSSSCCS. Residue glutamate 135 is the Proton donor of the active site. The active-site Nucleophile is the glutamate 280. Residues cysteine 390 and cysteine 453 are joined by a disulfide bond.

The protein belongs to the glycosyl hydrolase 17 family. Post-translationally, contains two additional disulfide bonds, but it is unclear if they are between the pairs Cys-409-Cys-416 and Cys-425-Cys-471 or between the pairs Cys-409-Cys-471 and Cys-416-Cys-425. Anthers.

It carries out the reaction Hydrolysis of (1-&gt;3)-beta-D-glucosidic linkages in (1-&gt;3)-beta-D-glucans.. Functionally, probable beta-1,3-glucanase that may be involved in the degradation of callose walls around the microspore tetrad during pollen development. May be required for pollen exine formation. This chain is Probable glucan endo-1,3-beta-glucosidase A6, found in Arabidopsis thaliana (Mouse-ear cress).